The following is a 406-amino-acid chain: Magnesium transporter NIPA4 (406 aa).

At 1–57 (MELRVANANGSCENGSIVSLYCSSQEVLCQIVRGISPEEPYNATLITWQERVRKKYG) the chain is on the extracellular side. N-linked (GlcNAc...) asparagine glycans are attached at residues Asn9, Asn14, and Asn42. Residues 58–78 (FYIGVGLAFLSCFLIGTSVIL) traverse the membrane as a helical segment. The Cytoplasmic portion of the chain corresponds to 79 to 126 (KKKGLIRLVATGATRAVNGGYGYLKDPMWWAGMATMSAGEVANFGAYA). The helical transmembrane segment at 127–147 (FAPATVVTPLGALSVLISAIF) threads the bilayer. The Extracellular portion of the chain corresponds to 148 to 155 (SSYCLGES). Residues 156–176 (LNLLGKLGCVICMAGSTVMVI) form a helical membrane-spanning segment. Residues 177–197 (HAPKEEKVTTVAEMASKMKDT) are Cytoplasmic-facing. The chain crosses the membrane as a helical span at residues 198–218 (GFIVFAVLLVVSCLILIFIVA). The Extracellular segment spans residues 219 to 225 (PRYGQRN). A helical transmembrane segment spans residues 226–246 (ILIYIIICSVIGSFSVTAVKG). Over 247–263 (LGVTIRNFFQGLPVVRH) the chain is Cytoplasmic. A helical transmembrane segment spans residues 264 to 284 (PLPYILSLILGLSIIIQVNFL). Residues 285-295 (NRALDIFNTSL) lie on the Extracellular side of the membrane. N-linked (GlcNAc...) asparagine glycosylation is present at Asn292. The helical transmembrane segment at 296–316 (VFPIYYVFFTTVVVASSIVLF) threads the bilayer. The Cytoplasmic portion of the chain corresponds to 317-326 (KEWYTMSAVD). Residues 327–347 (IVGTLSGFVTIILGVFMLHAF) traverse the membrane as a helical segment. At 348-406 (KDLDINQISLPHTHKNPTPAPAPEPTVIKLEDKNVLVDNIELASTPSPQQKPKVFMTDS) the chain is on the extracellular side.

This sequence belongs to the NIPA family.

It localises to the cell membrane. It catalyses the reaction Mg(2+)(in) = Mg(2+)(out). In terms of biological role, acts as a Mg(2+) transporter. Can also transport other divalent cations such as Ba(2+), Sr(2+) and Fe(2+) but to a much less extent than Mg(2+). May be a receptor for ligands (trioxilins A3 and B3) from the hepoxilin pathway. The chain is Magnesium transporter NIPA4 (Nipal4) from Mus musculus (Mouse).